A 1383-amino-acid polypeptide reads, in one-letter code: Putative autophagy-related protein 11 (1383 aa).

Coiled-coil stretches lie at residues 16 to 49 (DKNN…YELN) and 117 to 324 (NLFL…QNKE). Basic and acidic residues-rich tracts occupy residues 1151 to 1224 (EEEK…EDRK) and 1233 to 1249 (HSSD…KTKE). A disordered region spans residues 1151-1249 (EEEKKKNEEE…KYNKKEKTKE (99 aa)).

The protein belongs to the ATG11 family.

Involved in cytoplasm to vacuole transport (Cvt), pexophagy, mitophagy and nucleophagy. Works as scaffold proteins that recruit ATG proteins to the pre-autophagosome (PAS), the site of vesicle/autophagosome formation. The chain is Putative autophagy-related protein 11 from Plasmodium falciparum (isolate 3D7).